Reading from the N-terminus, the 224-residue chain is Fibronectin type III domain-containing protein 9 (224 aa).

A Fibronectin type-III domain is found at 1–101 (MNIEVGNISY…FHTLDKSPLA (101 aa)). A helical transmembrane segment spans residues 113–133 (LWVLMAILLACFTAVLAFICL). A disordered region spans residues 175–224 (LQGLPLVEMPRKNSRDGAELDPEANQDAPDAGALQRGGGDPPAILPHCGE). Over residues 183 to 192 (MPRKNSRDGA) the composition is skewed to basic and acidic residues.

Its subcellular location is the membrane. The sequence is that of Fibronectin type III domain-containing protein 9 (FNDC9) from Homo sapiens (Human).